The primary structure comprises 143 residues: MVGRDIDGAETYRISELAALAGVTKRTVDYYTNLGLLTPARSCSNYRYYDENALKRLIFIVDCKKQRLALSDIKDRLENQFPSSAKLDDEIGNLALEIDHMNQNISGILHRFERLKPEDRDKLKSKLPPEKLAVFQSFMLLLS.

In terms of domain architecture, HTH merR-type spans 11-79 (TYRISELAAL…LSDIKDRLEN (69 aa)). Positions 14-33 (ISELAALAGVTKRTVDYYTN) form a DNA-binding region, H-T-H motif.

Transcriptional activator of the copZA operon. This is HTH-type transcriptional regulator CueR (cueR) from Bacillus subtilis (strain 168).